The following is a 198-amino-acid chain: Photosystem I assembly protein Ycf4 (198 aa).

The tract at residues 1–20 (MTASTTINKGDSPNGDSSAS) is disordered. 2 helical membrane passes run 38–58 (WASIVTLGASGFLLAGISSYL) and 78–98 (LVMGLYGTAGLLLASYLWLAI).

Belongs to the Ycf4 family.

It is found in the cellular thylakoid membrane. Seems to be required for the assembly of the photosystem I complex. The polypeptide is Photosystem I assembly protein Ycf4 (Trichormus variabilis (strain ATCC 29413 / PCC 7937) (Anabaena variabilis)).